The sequence spans 403 residues: uncharacterized protein (403 aa).

A run of 12 helical transmembrane segments spans residues 25–47 (IAFF…ILFL), 62–81 (SLSA…GPLS), 88–110 (VVMS…MNSW), 114–136 (IFMR…TYLS), 143–165 (VLSF…GRFL), 175–197 (WNIA…VYLL), 229–251 (LFFM…GYRL), 256–278 (FFLG…YSSP), 290–307 (GVIL…VLIT), 311–330 (IVLL…FAAH), 350–372 (SIYL…IFWI), and 376–398 (WLGI…IRLL).

It belongs to the major facilitator superfamily.

Its subcellular location is the cell membrane. This is an uncharacterized protein from Buchnera aphidicola subsp. Baizongia pistaciae (strain Bp).